Reading from the N-terminus, the 466-residue chain is Asparagine--tRNA ligase (466 aa).

The protein belongs to the class-II aminoacyl-tRNA synthetase family. Homodimer.

Its subcellular location is the cytoplasm. It catalyses the reaction tRNA(Asn) + L-asparagine + ATP = L-asparaginyl-tRNA(Asn) + AMP + diphosphate + H(+). The chain is Asparagine--tRNA ligase from Shigella dysenteriae serotype 1 (strain Sd197).